Consider the following 840-residue polypeptide: Phosphatidylglycerol lysyltransferase (840 aa).

Residues 1–8 (MTEELKNR) are Cytoplasmic-facing. A helical transmembrane segment spans residues 9–29 (LLSILKFVFAAVLFIAVVATL). Residues 30–52 (YHELAHINFKQTLEAFSKINRWY) lie on the Extracellular side of the membrane. Residues 53-73 (LVGLFICGGSAMILLSLYDLI) form a helical membrane-spanning segment. The Cytoplasmic portion of the chain corresponds to 74 to 89 (LVKGLKLDIPLIRVFK). A helical membrane pass occupies residues 90–110 (ISYIINALNAIVGFGGFIGAG). Over 111-129 (FRAFIYKNYTTDRKKLVHA) the chain is Extracellular. Residues 130-150 (ISIILISMLMGLSLLSILVVL) traverse the membrane as a helical segment. Residues 151–167 (HIFDASHIINKVSWVRW) are Cytoplasmic-facing. The chain crosses the membrane as a helical span at residues 168–188 (ILYVVALFLPLFIAYTMINPI). The Extracellular portion of the chain corresponds to 189–193 (DRNNK). Residues 194–216 (YLGVYCTLVSSFEWLAAATVLYL) traverse the membrane as a helical segment. The Cytoplasmic portion of the chain corresponds to 217 to 229 (STVIVDINIAFTT). Residues 230–250 (VIGIFIIAALSGLVSFIPGGF) traverse the membrane as a helical segment. The Extracellular portion of the chain corresponds to 251–271 (GAFDLVVLLGLKSLGVPEEKV). A helical transmembrane segment spans residues 272–292 (LLALLLYRFAYYFVPVIIALI). Residues 293–335 (LSTFEFGSSARKYFEESKYFVPARDVTSFLFSYQKDIIAKIPS) are Cytoplasmic-facing. A helical membrane pass occupies residues 336 to 356 (FALATLVLITSFVFFINNITI). Topologically, residues 357 to 366 (VYDGLYDDHH) are extracellular. Residues 367–387 (FAYYIMLSVHTSACLLLLINV) form a helical membrane-spanning segment. Over 388–394 (RGVFKQS) the chain is Cytoplasmic. A run of 2 helical transmembrane segments spans residues 395-415 (RRAILFVMISLVLIFSATIYT) and 416-436 (YASLILLSWILLIFILLILAY). Residues 437–450 (RRSKVMKRPFRLKR) are Cytoplasmic-facing. Residues 451 to 471 (LIFTIILSMLVLYVNHFIISE) form a helical membrane-spanning segment. The Extracellular portion of the chain corresponds to 472 to 490 (TLYALDIYHIEMDTSLLKY). The chain crosses the membrane as a helical span at residues 491 to 511 (YFWLTILVVVILVGIVAWLLG). At 512 to 840 (SRYTRPHQLE…LKVMRVIRHK (329 aa)) the chain is on the cytoplasmic side.

It belongs to the LPG synthase family.

The protein localises to the cell membrane. The enzyme catalyses L-lysyl-tRNA(Lys) + a 1,2-diacyl-sn-glycero-3-phospho-(1'-sn-glycerol) = a 1,2-diacyl-sn-glycero-3-phospho-1'-(3'-O-L-lysyl)-sn-glycerol + tRNA(Lys). Its function is as follows. Catalyzes the transfer of a lysyl group from L-lysyl-tRNA(Lys) to membrane-bound phosphatidylglycerol (PG), which produces lysylphosphatidylglycerol (LPG), a major component of the bacterial membrane with a positive net charge. LPG synthesis contributes to bacterial virulence as it is involved in the resistance mechanism against cationic antimicrobial peptides (CAMP) produces by the host's immune system (defensins, cathelicidins) and by the competing microorganisms (bacteriocins). In fact, the modification of anionic phosphatidylglycerol with positively charged L-lysine results in repulsion of the peptides. In Staphylococcus haemolyticus (strain JCSC1435), this protein is Phosphatidylglycerol lysyltransferase (mprF).